Here is a 432-residue protein sequence, read N- to C-terminus: MQLLTIGINHHTAPVALRERVAFPLEQIKPALVTFKNVFLGPHAPNAPEAAILSTCNRTELYCATDDRAAREGAIRWLSEYHRISVDELAPHVYALPQSEAVRHAFRVASGLDSMVLGETQILGQMKDAVRTATEAGALGTYLNQLFQRTFAVAKEVRGTTEIGAQSVSMAAAAVRLAQRIFETVSDQRVLFIGAGEMIELCATHFAAQSPRELVIANRTAERGQRLAERFNGRAMPLSDLPTRMHEFDIIVSCTASTLPIIGLGAVERAVKARRHRPIFMVDLAVPRDIEPEVGKLKDVFLYTVDDLGAIVREGNASRQAAVAQAETIIETRVQNFMQWLDTRSVVPVIRHMHTQADALRRAEVEKAQKLLARGDDPAAVLEALSQALTNKLIHGPTSALNRVNGADRDSLIDLMRGFYQHAPRSNDQSGH.

Substrate is bound by residues 55 to 58 (TCNR), Ser114, 119 to 121 (ETQ), and Gln125. Cys56 serves as the catalytic Nucleophile. Position 194 to 199 (194 to 199 (GAGEMI)) interacts with NADP(+).

Belongs to the glutamyl-tRNA reductase family. In terms of assembly, homodimer.

It carries out the reaction (S)-4-amino-5-oxopentanoate + tRNA(Glu) + NADP(+) = L-glutamyl-tRNA(Glu) + NADPH + H(+). It functions in the pathway porphyrin-containing compound metabolism; protoporphyrin-IX biosynthesis; 5-aminolevulinate from L-glutamyl-tRNA(Glu): step 1/2. In terms of biological role, catalyzes the NADPH-dependent reduction of glutamyl-tRNA(Glu) to glutamate 1-semialdehyde (GSA). The polypeptide is Glutamyl-tRNA reductase (Burkholderia ambifaria (strain ATCC BAA-244 / DSM 16087 / CCUG 44356 / LMG 19182 / AMMD) (Burkholderia cepacia (strain AMMD))).